The sequence spans 170 residues: MTIEFDRPGAHVTAADHRALMSLFPTGVAVITAIDEAGTPHGMTCTSLTSVTLDPPTLLVCLNRASGTLHAVRGGRFGVNLLHARGRRAAEVFSTAVQDRFGEVRWEHSDVTGMPWLAEDAHAFAGCVVRKSTVVGDHEIVLGEVHEVVREHDLPLLYGMREFAVWTPEG.

Belongs to the non-flavoprotein flavin reductase family.

The catalysed reaction is reduced riboflavin + NADP(+) = riboflavin + NADPH + 2 H(+). In terms of biological role, catalyzes the NADH-dependent reduction of FAD to provide FADH2 for the halogenase RebH. This is Flavin reductase (NADPH) (rbmH) from Lentzea aerocolonigenes (Lechevalieria aerocolonigenes).